The primary structure comprises 757 residues: Polyribonucleotide nucleotidyltransferase (757 aa).

Residues Asp487 and Asp493 each contribute to the Mg(2+) site. Residues 554–613 (PRITTVRVKPDQIRLIIGPGGKTIKGIVDQTGVAIDVEDDGTVNVASADSDAVKRALDII) form the KH domain. The region spanning 623–691 (GATYKGTVKR…REGKIRLSRR (69 aa)) is the S1 motif domain. Residues 697 to 757 (PEGEEGDRAR…PPRERRERRS (61 aa)) form a disordered region. Basic and acidic residues-rich tracts occupy residues 702-711 (GDRARERMAQ) and 719-757 (PRRD…ERRS).

The protein belongs to the polyribonucleotide nucleotidyltransferase family. Requires Mg(2+) as cofactor.

Its subcellular location is the cytoplasm. It catalyses the reaction RNA(n+1) + phosphate = RNA(n) + a ribonucleoside 5'-diphosphate. Its function is as follows. Involved in mRNA degradation. Catalyzes the phosphorolysis of single-stranded polyribonucleotides processively in the 3'- to 5'-direction. In Sorangium cellulosum (strain So ce56) (Polyangium cellulosum (strain So ce56)), this protein is Polyribonucleotide nucleotidyltransferase.